Here is a 62-residue protein sequence, read N- to C-terminus: Single-pass membrane and coiled-coil domain-containing protein 4 homolog (62 aa).

The disordered stretch occupies residues 1–27 (MRQLPGKAAKETRKMKRERKQQNKEGH). The stretch at 9-31 (AKETRKMKRERKQQNKEGHNRVV) forms a coiled coil. The chain crosses the membrane as a helical span at residues 30–50 (VVTVAIPVCLAVFVMLIVYVY).

This sequence belongs to the SMCO4 family.

It localises to the membrane. The sequence is that of Single-pass membrane and coiled-coil domain-containing protein 4 homolog from Nematostella vectensis (Starlet sea anemone).